The primary structure comprises 211 residues: Thiamine-phosphate synthase (211 aa).

4-amino-2-methyl-5-(diphosphooxymethyl)pyrimidine contacts are provided by residues 37-41 (QLRIK) and asparagine 69. Residues aspartate 70 and aspartate 89 each coordinate Mg(2+). A 4-amino-2-methyl-5-(diphosphooxymethyl)pyrimidine-binding site is contributed by serine 108. 2-[(2R,5Z)-2-carboxy-4-methylthiazol-5(2H)-ylidene]ethyl phosphate is bound at residue 134–136 (TQT). Residue lysine 137 participates in 4-amino-2-methyl-5-(diphosphooxymethyl)pyrimidine binding. Residues glycine 166 and 186-187 (VS) contribute to the 2-[(2R,5Z)-2-carboxy-4-methylthiazol-5(2H)-ylidene]ethyl phosphate site.

It belongs to the thiamine-phosphate synthase family. Mg(2+) is required as a cofactor.

The catalysed reaction is 2-[(2R,5Z)-2-carboxy-4-methylthiazol-5(2H)-ylidene]ethyl phosphate + 4-amino-2-methyl-5-(diphosphooxymethyl)pyrimidine + 2 H(+) = thiamine phosphate + CO2 + diphosphate. It catalyses the reaction 2-(2-carboxy-4-methylthiazol-5-yl)ethyl phosphate + 4-amino-2-methyl-5-(diphosphooxymethyl)pyrimidine + 2 H(+) = thiamine phosphate + CO2 + diphosphate. It carries out the reaction 4-methyl-5-(2-phosphooxyethyl)-thiazole + 4-amino-2-methyl-5-(diphosphooxymethyl)pyrimidine + H(+) = thiamine phosphate + diphosphate. The protein operates within cofactor biosynthesis; thiamine diphosphate biosynthesis; thiamine phosphate from 4-amino-2-methyl-5-diphosphomethylpyrimidine and 4-methyl-5-(2-phosphoethyl)-thiazole: step 1/1. In terms of biological role, condenses 4-methyl-5-(beta-hydroxyethyl)thiazole monophosphate (THZ-P) and 2-methyl-4-amino-5-hydroxymethyl pyrimidine pyrophosphate (HMP-PP) to form thiamine monophosphate (TMP). The chain is Thiamine-phosphate synthase from Escherichia coli O6:H1 (strain CFT073 / ATCC 700928 / UPEC).